The primary structure comprises 178 residues: MSVEVSNESGFDVSEVELVSVARFVIIKMDVNPAAELSMVLLDTAAMADLHMRWMDLPGPTDVMSFPMDEFEPGGRPDAAEPGPSMLGDIVLCPEFAAQQAAAEGHSLGHELALLTIHGVLHLLGYDHGEPDEEKEMFALQGRLLEEWVAEQVRAYQHDRQNEKDCRLLYKSGYFGYL.

His118, His122, and His128 together coordinate Zn(2+).

This sequence belongs to the endoribonuclease YbeY family. The cofactor is Zn(2+).

The protein localises to the cytoplasm. Functionally, single strand-specific metallo-endoribonuclease involved in late-stage 70S ribosome quality control and in maturation of the 3' terminus of the 16S rRNA. This is Endoribonuclease YbeY from Mycobacterium leprae (strain Br4923).